The primary structure comprises 427 residues: Putative dipeptidase MCYG_02918 (427 aa).

A signal peptide spans 1–29; the sequence is MAPERRSRLSDAGILVSLLALTSLVPVQA. Zn(2+)-binding residues include histidine 55, aspartate 57, and glutamate 167. Cysteine 106 and cysteine 196 are disulfide-bonded. Histidine 194 serves as a coordination point for substrate. 2 residues coordinate Zn(2+): histidine 238 and histidine 259. Substrate is bound by residues arginine 270 and aspartate 330. Asparagine 402 is a glycosylation site (N-linked (GlcNAc...) asparagine).

This sequence belongs to the metallo-dependent hydrolases superfamily. Peptidase M19 family. It depends on Zn(2+) as a cofactor.

The enzyme catalyses an L-aminoacyl-L-amino acid + H2O = 2 an L-alpha-amino acid. In terms of biological role, hydrolyzes a wide range of dipeptides. This Arthroderma otae (strain ATCC MYA-4605 / CBS 113480) (Microsporum canis) protein is Putative dipeptidase MCYG_02918.